A 524-amino-acid chain; its full sequence is Phosphoenolpyruvate carboxykinase (ATP) (524 aa).

3 residues coordinate substrate: Arg-52, Tyr-188, and Lys-194. ATP is bound by residues Lys-194, His-213, and 229-237; that span reads GLSGTGKTT. Mn(2+) is bound by residues Lys-194 and His-213. Asp-250 lines the Mn(2+) pocket. Residues Glu-278, Arg-314, and Thr-439 each contribute to the ATP site. Arg-314 is a binding site for substrate.

Belongs to the phosphoenolpyruvate carboxykinase (ATP) family. It depends on Mn(2+) as a cofactor.

Its subcellular location is the cytoplasm. The catalysed reaction is oxaloacetate + ATP = phosphoenolpyruvate + ADP + CO2. It functions in the pathway carbohydrate biosynthesis; gluconeogenesis. Involved in the gluconeogenesis. Catalyzes the conversion of oxaloacetate (OAA) to phosphoenolpyruvate (PEP) through direct phosphoryl transfer between the nucleoside triphosphate and OAA. In Campylobacter jejuni (strain RM1221), this protein is Phosphoenolpyruvate carboxykinase (ATP).